The following is a 375-amino-acid chain: 23S rRNA (uracil(747)-C(5))-methyltransferase RlmC (375 aa).

[4Fe-4S] cluster-binding residues include Cys3, Cys11, Cys14, and Cys87. Gln212, Phe241, Glu262, and Asn307 together coordinate S-adenosyl-L-methionine. Cys334 serves as the catalytic Nucleophile.

It belongs to the class I-like SAM-binding methyltransferase superfamily. RNA M5U methyltransferase family. RlmC subfamily.

It carries out the reaction uridine(747) in 23S rRNA + S-adenosyl-L-methionine = 5-methyluridine(747) in 23S rRNA + S-adenosyl-L-homocysteine + H(+). Its function is as follows. Catalyzes the formation of 5-methyl-uridine at position 747 (m5U747) in 23S rRNA. The sequence is that of 23S rRNA (uracil(747)-C(5))-methyltransferase RlmC from Salmonella enteritidis PT4 (strain P125109).